Here is a 249-residue protein sequence, read N- to C-terminus: 2-C-methyl-D-erythritol 4-phosphate cytidylyltransferase (249 aa).

This sequence belongs to the IspD/TarI cytidylyltransferase family. IspD subfamily.

The enzyme catalyses 2-C-methyl-D-erythritol 4-phosphate + CTP + H(+) = 4-CDP-2-C-methyl-D-erythritol + diphosphate. It functions in the pathway isoprenoid biosynthesis; isopentenyl diphosphate biosynthesis via DXP pathway; isopentenyl diphosphate from 1-deoxy-D-xylulose 5-phosphate: step 2/6. Its function is as follows. Catalyzes the formation of 4-diphosphocytidyl-2-C-methyl-D-erythritol from CTP and 2-C-methyl-D-erythritol 4-phosphate (MEP). This is 2-C-methyl-D-erythritol 4-phosphate cytidylyltransferase from Thermobifida fusca (strain YX).